The sequence spans 544 residues: (E,E)-germacrene B synthase (544 aa).

Asp296, Asp300, and Glu449 together coordinate Mg(2+). A DDXXD motif motif is present at residues 296–300 (DDTFD).

The protein belongs to the terpene synthase family. The cofactor is Mg(2+). It depends on Mn(2+) as a cofactor.

Its subcellular location is the cytoplasm. The enzyme catalyses (2E,6E)-farnesyl diphosphate = (1E,4E)-germacrene B + diphosphate. It participates in secondary metabolite biosynthesis; terpenoid biosynthesis. Involved in the biosynthesis of germacrene B. The sequence is that of (E,E)-germacrene B synthase (SSTLH1) from Solanum habrochaites (Wild tomato).